A 110-amino-acid chain; its full sequence is METIAKHRHARSSAQKVRLVADLIRGKKVSQALDILTYTNKKAAVQVKKVLESAIANAEHNDGADIDDLKVTKIFVDEGPSMKRIMPRAKGRADRILKRTSHITVVVSDR.

This sequence belongs to the universal ribosomal protein uL22 family. Part of the 50S ribosomal subunit.

In terms of biological role, this protein binds specifically to 23S rRNA; its binding is stimulated by other ribosomal proteins, e.g. L4, L17, and L20. It is important during the early stages of 50S assembly. It makes multiple contacts with different domains of the 23S rRNA in the assembled 50S subunit and ribosome. The globular domain of the protein is located near the polypeptide exit tunnel on the outside of the subunit, while an extended beta-hairpin is found that lines the wall of the exit tunnel in the center of the 70S ribosome. In Shigella flexneri serotype 5b (strain 8401), this protein is Large ribosomal subunit protein uL22.